Reading from the N-terminus, the 418-residue chain is CinA-like protein (418 aa).

This sequence belongs to the CinA family.

This is CinA-like protein from Cytophaga hutchinsonii (strain ATCC 33406 / DSM 1761 / CIP 103989 / NBRC 15051 / NCIMB 9469 / D465).